Here is a 430-residue protein sequence, read N- to C-terminus: Glutamate-1-semialdehyde 2,1-aminomutase 2 (430 aa).

Lys-269 bears the N6-(pyridoxal phosphate)lysine mark.

It belongs to the class-III pyridoxal-phosphate-dependent aminotransferase family. HemL subfamily. In terms of assembly, homodimer. Requires pyridoxal 5'-phosphate as cofactor.

It localises to the cytoplasm. It carries out the reaction (S)-4-amino-5-oxopentanoate = 5-aminolevulinate. It participates in porphyrin-containing compound metabolism; protoporphyrin-IX biosynthesis; 5-aminolevulinate from L-glutamyl-tRNA(Glu): step 2/2. The polypeptide is Glutamate-1-semialdehyde 2,1-aminomutase 2 (Bacillus pumilus (strain SAFR-032)).